Here is a 172-residue protein sequence, read N- to C-terminus: MFYHISLEHEILLHPRYFGPNLLNTVKQKLFTEVEGTCTGKYGFVIAVTTIDNIGAGVIQPGRGFVLYPVKYKAIVFRPFKGEVVDAVVTQVNKVGLFTEIGPMSCFISRHSIPSEMEFDPNSNPPCYKTMDEDIVIQQDDEIRLKIVGTRVDKNDIFAIGSLMDDYLGLVS.

It belongs to the eukaryotic RPB7/RPC8 RNA polymerase subunit family. Component of the RNA polymerase II (Pol II) core complex consisting of 12 subunits: a ten-subunit catalytic core composed of POLR2A/RPB1, POLR2B/RPB2, POLR2C/RPB3, POLR2I/RPB9, POLR2J/RPB11, POLR2E/RPABC1, POLR2F/RPABC2, POLR2H/RPABC3, POLR2K/RPABC4 and POLR2L/RPABC5 and a mobile stalk composed of two subunits POLR2D/RPB4 and POLR2G/RPB7, protruding from the core and functioning primarily in transcription initiation. Part of Pol II(G) complex, in which Pol II core associates with an additional subunit POLR2M; unlike conventional Pol II, Pol II(G) functions as a transcriptional repressor. Part of TBP-based Pol II pre-initiation complex (PIC), in which Pol II core assembles with general transcription factors and other specific initiation factors including GTF2E1, GTF2E2, GTF2F1, GTF2F2, TCEA1, ERCC2, ERCC3, GTF2H2, GTF2H3, GTF2H4, GTF2H5, GTF2A1, GTF2A2, GTF2B and TBP; this large multi-subunit PIC complex mediates DNA unwinding and targets Pol II core to the transcription start site where the first phosphodiester bond forms.

The protein localises to the nucleus. Its function is as follows. Core component of RNA polymerase II (Pol II), a DNA-dependent RNA polymerase which synthesizes mRNA precursors and many functional non-coding RNAs using the four ribonucleoside triphosphates as substrates. Pol II is the central component of the basal RNA polymerase II transcription machinery. It is composed of mobile elements that move relative to each other. POLR2G/RPB7 is part of a subcomplex with POLR2D/RPB4 that binds to a pocket formed by POLR2A/RPB1, POLR2B/RPB2 and POLR2F/RPABC2 at the base of the clamp element. The POLR2D/RPB4-POLR2G/RPB7 subcomplex seems to lock the clamp via POLR2G/RPB7 in the closed conformation thus preventing double-stranded DNA to enter the active site cleft. The POLR2D/RPB4-POLR2G/RPB7 subcomplex binds single-stranded DNA and RNA. In Bos taurus (Bovine), this protein is DNA-directed RNA polymerase II subunit RPB7 (POLR2G).